We begin with the raw amino-acid sequence, 241 residues long: Fatty acid metabolism regulator protein (241 aa).

The HTH gntR-type domain occupies 6–74 (KGPASFAEKY…HGKPTRVNNF (69 aa)). Positions 34 to 53 (ERELSELIGVTRTTLREVLQ) form a DNA-binding region, H-T-H motif.

Homodimer.

The protein resides in the cytoplasm. Multifunctional regulator of fatty acid metabolism. This is Fatty acid metabolism regulator protein from Shewanella sp. (strain MR-4).